Consider the following 146-residue polypeptide: Large ribosomal subunit protein uL11 (146 aa).

The protein belongs to the universal ribosomal protein uL11 family. As to quaternary structure, part of the ribosomal stalk of the 50S ribosomal subunit. Interacts with L10 and the large rRNA to form the base of the stalk. L10 forms an elongated spine to which L12 dimers bind in a sequential fashion forming a multimeric L10(L12)X complex. One or more lysine residues are methylated.

Forms part of the ribosomal stalk which helps the ribosome interact with GTP-bound translation factors. The sequence is that of Large ribosomal subunit protein uL11 from Wolbachia pipientis wMel.